A 469-amino-acid chain; its full sequence is MSAEHVLTMLNEHEVKFVDLRFTDTKGKEQHVTIPAHQVNAEFFEEGKMFDGSSIGGWKGINESDMVLMPDASTAVIDPFFADSTLIIRCDILEPGTLQGYDRDPRSIAKRAEDYLRATGIADTVLFGPEPEFFLFDDIRFGASISGSHVAIDDIEGAWNSSTKYEGGNKGHRPGVKGGYFPVPPVDSAQDIRSEMCLVMEQMGLVVEAHHHEVATAGQNEVATRFNTMTKKADEIQIYKYVVHNVAHRFGKTATFMPKPMFGDNGSGMHCHMSLAKNGTNLFSGDKYAGLSEQALYYIGGVIKHAKAINALANPTTNSYKRLVPGYEAPVMLAYSARNRSASIRIPVVASPKARRIEVRFPDPAANPYLCFAALLMAGLDGIKNKIHPGEAMDKNLYDLPPEEAKEIPQVAGSLEEALNALDLDREFLKAGGVFTDEAIDAYIALRREEDDRVRMTPHPVEFELYYSV.

The GS beta-grasp domain maps to 13–97 (HEVKFVDLRF…IRCDILEPGT (85 aa)). The region spanning 105–469 (PRSIAKRAED…PVEFELYYSV (365 aa)) is the GS catalytic domain. Mg(2+) contacts are provided by glutamate 130 and glutamate 132. Glutamate 208 lines the ATP pocket. Positions 213 and 221 each coordinate Mg(2+). L-glutamate-binding positions include 265 to 266 (NG) and glycine 266. Histidine 270 serves as a coordination point for Mg(2+). Residues 272 to 274 (HMS) and serine 274 each bind ATP. L-glutamate is bound by residues arginine 322, glutamate 328, and arginine 340. ATP is bound by residues arginine 340, arginine 345, and lysine 353. Mg(2+) is bound at residue glutamate 358. Position 360 (arginine 360) interacts with L-glutamate. Tyrosine 398 carries the O-AMP-tyrosine modification.

This sequence belongs to the glutamine synthetase family. In terms of assembly, oligomer of 12 subunits arranged in the form of two hexagons. It depends on Mn(2+) as a cofactor.

The protein resides in the cytoplasm. The catalysed reaction is L-glutamate + NH4(+) + ATP = L-glutamine + ADP + phosphate + H(+). With respect to regulation, when cellular nitrogen levels are high, the C-terminal adenylyl transferase (AT) of GlnE inhibits GlnA by covalent transfer of an adenylyl group from ATP to Tyr-398. Conversely, when nitrogen levels are low, the N-terminal adenylyl removase (AR) of GlnE activates GlnA by removing the adenylyl group by phosphorolysis. The fully adenylated enzyme complex is inactive. Catalyzes the ATP-dependent biosynthesis of glutamine from glutamate and ammonia. This chain is Glutamine synthetase, found in Salmonella typhi.